We begin with the raw amino-acid sequence, 551 residues long: Cation/acetate symporter ActP (551 aa).

The next 13 helical transmembrane spans lie at 34–54, 77–97, 104–124, 150–170, 184–204, 207–227, 263–283, 304–324, 356–376, 406–426, 430–450, 469–489, and 498–518; these read IEAIVMFVLFVGATLYITYWA, GLAIAGDFMSAASFLGISALV, GLIYSIGFLIGWPIILFLIAE, LSACGSLVVVALYLIAQMVGA, VAVVLVGILMVMYVLFGGMLA, WVQIIKAVLLLAGASFMALMV, ISALSLGLALMFGTAGLPHIL, GFIGYFYILTFIIGFGAILLV, FFLGFISAVAFATILAVVAGL, VSKITVVVLGFVAIGLGILFE, IAFMVGLAFSIAASCNFPIIF, LGLLTAVILMILGPTIWVTIL, and YEYPALFSMIVAFVGIWFFSI.

It belongs to the sodium:solute symporter (SSF) (TC 2.A.21) family.

The protein resides in the cell inner membrane. In terms of biological role, transports acetate. In Yersinia enterocolitica serotype O:8 / biotype 1B (strain NCTC 13174 / 8081), this protein is Cation/acetate symporter ActP.